We begin with the raw amino-acid sequence, 342 residues long: Isopentenyl-diphosphate delta-isomerase (342 aa).

Position 11–12 (11–12 (RK)) interacts with substrate. Residues Ser-68, 69–71 (SMT), Ser-99, and Asn-127 contribute to the FMN site. 99–101 (SMR) contributes to the substrate binding site. Gln-162 serves as a coordination point for substrate. Residue Glu-163 coordinates Mg(2+). FMN-binding positions include Lys-194, Thr-224, 274-276 (GLK), and 295-296 (AG).

The protein belongs to the IPP isomerase type 2 family. In terms of assembly, homooctamer. Dimer of tetramers. The cofactor is FMN. NADPH serves as cofactor. Mg(2+) is required as a cofactor.

It is found in the cytoplasm. It catalyses the reaction isopentenyl diphosphate = dimethylallyl diphosphate. In terms of biological role, involved in the biosynthesis of isoprenoids. Catalyzes the 1,3-allylic rearrangement of the homoallylic substrate isopentenyl (IPP) to its allylic isomer, dimethylallyl diphosphate (DMAPP). The sequence is that of Isopentenyl-diphosphate delta-isomerase from Rickettsia africae (strain ESF-5).